A 547-amino-acid chain; its full sequence is ATP synthase subunit alpha (547 aa).

172 to 179 is an ATP binding site; that stretch reads GDRKTGKT.

The protein belongs to the ATPase alpha/beta chains family. In terms of assembly, F-type ATPases have 2 components, CF(1) - the catalytic core - and CF(0) - the membrane proton channel. CF(1) has five subunits: alpha(3), beta(3), gamma(1), delta(1), epsilon(1). CF(0) has three main subunits: a(1), b(2) and c(9-12). The alpha and beta chains form an alternating ring which encloses part of the gamma chain. CF(1) is attached to CF(0) by a central stalk formed by the gamma and epsilon chains, while a peripheral stalk is formed by the delta and b chains.

The protein localises to the cell membrane. It catalyses the reaction ATP + H2O + 4 H(+)(in) = ADP + phosphate + 5 H(+)(out). Functionally, produces ATP from ADP in the presence of a proton gradient across the membrane. The alpha chain is a regulatory subunit. The chain is ATP synthase subunit alpha from Rhodococcus jostii (strain RHA1).